We begin with the raw amino-acid sequence, 225 residues long: MAQSDFLYPQNPRRRQEVNRLHQQLLDCLSDSFQVTNKLTGVLNTHLGCRLAFIEMKSDGTIKENCDIIIQAMTKIQKELQKIDEALKDQLEPTLYRKLQDIKERETEKIAIVQKVISVILGEATSAASAVAVKLVGSSVTTGIISKLVSVLAHIGTSLLGSIGVAVLSLGIDMIIQAILGAVERTQLQAAIKSYEKHLEEFKAASAKYHHAITEVATAVKRQLR.

The stretch at 69-92 (IIQAMTKIQKELQKIDEALKDQLE) forms a coiled coil. The helical transmembrane segment at 155–175 (IGTSLLGSIGVAVLSLGIDMI) threads the bilayer. The stretch at 182–209 (AVERTQLQAAIKSYEKHLEEFKAASAKY) forms a coiled coil.

The protein localises to the membrane. The chain is Single-pass membrane and coiled-coil domain-containing protein 3 (Smco3) from Mus musculus (Mouse).